A 187-amino-acid chain; its full sequence is Adenine phosphoribosyltransferase (187 aa).

It belongs to the purine/pyrimidine phosphoribosyltransferase family. In terms of assembly, homodimer.

It is found in the cytoplasm. The catalysed reaction is AMP + diphosphate = 5-phospho-alpha-D-ribose 1-diphosphate + adenine. It participates in purine metabolism; AMP biosynthesis via salvage pathway; AMP from adenine: step 1/1. In terms of biological role, catalyzes a salvage reaction resulting in the formation of AMP, that is energically less costly than de novo synthesis. The protein is Adenine phosphoribosyltransferase of Yersinia enterocolitica serotype O:8 / biotype 1B (strain NCTC 13174 / 8081).